Reading from the N-terminus, the 708-residue chain is Glycine--tRNA ligase beta subunit (708 aa).

Belongs to the class-II aminoacyl-tRNA synthetase family. In terms of assembly, tetramer of two alpha and two beta subunits.

The protein resides in the cytoplasm. The enzyme catalyses tRNA(Gly) + glycine + ATP = glycyl-tRNA(Gly) + AMP + diphosphate. In Paracidovorax citrulli (strain AAC00-1) (Acidovorax citrulli), this protein is Glycine--tRNA ligase beta subunit.